The chain runs to 186 residues: Elongation factor P (186 aa).

Belongs to the elongation factor P family.

The protein resides in the cytoplasm. Its pathway is protein biosynthesis; polypeptide chain elongation. Its function is as follows. Involved in peptide bond synthesis. Stimulates efficient translation and peptide-bond synthesis on native or reconstituted 70S ribosomes in vitro. Probably functions indirectly by altering the affinity of the ribosome for aminoacyl-tRNA, thus increasing their reactivity as acceptors for peptidyl transferase. The chain is Elongation factor P from Polynucleobacter necessarius subsp. necessarius (strain STIR1).